The sequence spans 316 residues: Small ribosomal subunit protein RACK1 (316 aa).

WD repeat units follow at residues 13–44 (GHNG…IIWN), 61–91 (GHSH…RLWE), 103–133 (GHTN…KLWN), 146–178 (GHTE…KVWE), 190–220 (GHTG…MLWD), 231–260 (NAND…IIFD), and 281–311 (SREP…RAWG).

Belongs to the WD repeat G protein beta family. Ribosomal protein RACK1 subfamily. Component of the small ribosomal subunit (SSU). Mature N.crassa ribosomes consist of a small (40S) and a large (60S) subunit. The 40S small subunit contains 1 molecule of ribosomal RNA (18S rRNA) and at least 32 different proteins. The large 60S subunit contains 3 rRNA molecules (26S, 5.8S and 5S rRNA) and at least 42 different proteins.

Its subcellular location is the cytoplasm. Its function is as follows. Component of the ribosome, a large ribonucleoprotein complex responsible for the synthesis of proteins in the cell. The small ribosomal subunit (SSU) binds messenger RNAs (mRNAs) and translates the encoded message by selecting cognate aminoacyl-transfer RNA (tRNA) molecules. The large subunit (LSU) contains the ribosomal catalytic site termed the peptidyl transferase center (PTC), which catalyzes the formation of peptide bonds, thereby polymerizing the amino acids delivered by tRNAs into a polypeptide chain. The nascent polypeptides leave the ribosome through a tunnel in the LSU and interact with protein factors that function in enzymatic processing, targeting, and the membrane insertion of nascent chains at the exit of the ribosomal tunnel. Required to activate general amino acid control under conditions of amino acid limitation in the vegetative growth phase, and for formation of protoperithecia in preparation for the sexual phase of the life cycle of N.crassa. This chain is Small ribosomal subunit protein RACK1 (cpc-2), found in Neurospora crassa (strain ATCC 24698 / 74-OR23-1A / CBS 708.71 / DSM 1257 / FGSC 987).